A 1220-amino-acid chain; its full sequence is Protein patched homolog 1 (1220 aa).

The disordered stretch occupies residues 1 to 27 (MASDPRDPGPAGGVFGDLPPSYTRSPP). Over 1–84 (MASDPRDPGP…GCHIQRHCGK (84 aa)) the chain is Cytoplasmic. Residues 85 to 105 (VLFIGLLVFGALSVGLRVAAI) form a helical membrane-spanning segment. At 106-419 (ETDIEKLWVE…LNDIMKSFSD (314 aa)) the chain is on the extracellular side. N397 carries N-linked (GlcNAc...) asparagine glycosylation. Residues 420–440 (VSVIRVAGGYLLMLAYACVTM) form a helical membrane-spanning segment. Positions 421-579 (SVIRVAGGYL…LLIFPAILSL (159 aa)) constitute an SSD domain. Topologically, residues 441-449 (LRWDCAKSQ) are cytoplasmic. A helical membrane pass occupies residues 450–470 (GAVGLAGVLLVALSVAAGLGL). The Extracellular portion of the chain corresponds to 471–484 (CSLLGLSFNAATTQ). A helical membrane pass occupies residues 485-505 (VLPSLALGIGVDDMFLLGHSF). At 506–528 (TETRSNIPFKERTGDCLRRTGTS) the chain is on the cytoplasmic side. Residues 529–549 (VALTSVNNMIAFFMAALVPIP) form a helical membrane-spanning segment. Residues 550-558 (ALRAFSLQA) lie on the Extracellular side of the membrane. Residues 559–579 (AVVVVFNFAMALLIFPAILSL) traverse the membrane as a helical segment. The Cytoplasmic portion of the chain corresponds to 580–739 (DLHRREDKRL…APLLLKPETK (160 aa)). Residues 740–760 (TVVVVVFVALLSLSLYGTTMV) traverse the membrane as a helical segment. Residues 761–1016 (HDGLYLTDIV…WEQYIGLRHW (256 aa)) are Extracellular-facing. N-linked (GlcNAc...) asparagine glycans are attached at residues N865 and N888. A helical transmembrane segment spans residues 1017-1037 (FLLSISVVLACTFLVCAILLL). Residues 1038 to 1044 (NPWTAGV) lie on the Cytoplasmic side of the membrane. A helical transmembrane segment spans residues 1045–1065 (IVFILPMMTVELFGIMGLIGI). Residues 1066 to 1072 (KLSAIPV) are Extracellular-facing. A helical membrane pass occupies residues 1073–1093 (VILIASVGIGVEFTVHIALGF). Over 1094-1110 (LTAIGDRNTRSAVAMEH) the chain is Cytoplasmic. A helical membrane pass occupies residues 1111 to 1131 (MFAPVIDGAISTLLGVLMLAG). At 1132-1143 (SEFDFIMRYFFA) the chain is on the extracellular side. A helical membrane pass occupies residues 1144–1164 (VLAILTLLGILNGLVLLPVLL). Residues 1165 to 1220 (SLMGPPAEVVPANNANHLQSPSPEPMPPPMNHHGYYAGHIPKASHQAFSETSDSEY) lie on the Cytoplasmic side of the membrane.

It belongs to the patched family. In terms of processing, glycosylation is necessary for SHH binding. In terms of tissue distribution, detected in embryonic presomitic mesoderm, neuroectoderm, tissue surrounding the notochord, ventral neural tube.

Its subcellular location is the membrane. Acts as a receptor for sonic hedgehog (SHH), indian hedgehog (IHH) and desert hedgehog (DHH). Associates with the smoothened protein (SMO) to transduce the hedgehog's proteins signal. This Danio rerio (Zebrafish) protein is Protein patched homolog 1 (ptch1).